Here is a 279-residue protein sequence, read N- to C-terminus: Large ribosomal subunit protein uL2 (279 aa).

2 disordered regions span residues 29–59 (PEKS…GGHK) and 224–279 (VAMN…KNKR). Over residues 50-59 (TTRHKGGGHK) the composition is skewed to basic residues. A compositionally biased stretch (basic and acidic residues) spans 253 to 268 (PEGRTRRPNKESDKLI). Residues 269–279 (VRRRRTGKNKR) are compositionally biased toward basic residues.

It belongs to the universal ribosomal protein uL2 family. Part of the 50S ribosomal subunit. Forms a bridge to the 30S subunit in the 70S ribosome.

One of the primary rRNA binding proteins. Required for association of the 30S and 50S subunits to form the 70S ribosome, for tRNA binding and peptide bond formation. It has been suggested to have peptidyltransferase activity; this is somewhat controversial. Makes several contacts with the 16S rRNA in the 70S ribosome. The sequence is that of Large ribosomal subunit protein uL2 from Paenarthrobacter aurescens (strain TC1).